A 492-amino-acid polypeptide reads, in one-letter code: UDP-N-acetylmuramyl-tripeptide synthetase 2 (492 aa).

S30 is a binding site for UDP-N-acetyl-alpha-D-muramoyl-L-alanyl-D-glutamate. 111-117 (GTNGKTT) is an ATP binding site. Residues 154–155 (TT), S181, Q187, and R189 each bind UDP-N-acetyl-alpha-D-muramoyl-L-alanyl-D-glutamate. K221 bears the N6-carboxylysine mark.

Belongs to the MurCDEF family. MurE subfamily. Post-translationally, carboxylation is probably crucial for Mg(2+) binding and, consequently, for the gamma-phosphate positioning of ATP.

It is found in the cytoplasm. Its pathway is cell wall biogenesis; peptidoglycan biosynthesis. Functionally, catalyzes the addition of an amino acid to the nucleotide precursor UDP-N-acetylmuramoyl-L-alanyl-D-glutamate (UMAG) in the biosynthesis of bacterial cell-wall peptidoglycan. The polypeptide is UDP-N-acetylmuramyl-tripeptide synthetase 2 (Oceanobacillus iheyensis (strain DSM 14371 / CIP 107618 / JCM 11309 / KCTC 3954 / HTE831)).